A 566-amino-acid polypeptide reads, in one-letter code: ATP-binding protein SyrD (566 aa).

In terms of domain architecture, ABC transmembrane type-1 spans 22–301 (HPWLTFFTLL…LVSAMPMLAQ (280 aa)). The next 6 membrane-spanning stretches (helical) occupy residues 24 to 44 (WLTF…IAVV), 61 to 81 (LFWF…ASLF), 132 to 152 (LLIM…IAYL), 158 to 178 (VVFA…LLFF), 250 to 270 (QLTL…FAVI), and 279 to 299 (VLAV…MPML). The region spanning 343-566 (IQLKNVHMNY…VKCAVEGKRA (224 aa)) is the ABC transporter domain. 380–387 (GGNGCGKS) is a binding site for ATP.

Belongs to the ABC transporter superfamily. As to quaternary structure, dimer.

It localises to the cell inner membrane. Functionally, ATP-driven efflux pump necessary for the secretion of syringomycin. May specifically bind syringomycin and translocate it to the periplasmic space. SyrD is also required for full expression of the syrB gene. The sequence is that of ATP-binding protein SyrD (syrD) from Pseudomonas syringae pv. syringae.